The chain runs to 280 residues: Urease accessory protein UreD (280 aa).

It belongs to the UreD family. In terms of assembly, ureD, UreF and UreG form a complex that acts as a GTP-hydrolysis-dependent molecular chaperone, activating the urease apoprotein by helping to assemble the nickel containing metallocenter of UreC. The UreE protein probably delivers the nickel.

The protein resides in the cytoplasm. Functionally, required for maturation of urease via the functional incorporation of the urease nickel metallocenter. In Pseudomonas aeruginosa (strain ATCC 15692 / DSM 22644 / CIP 104116 / JCM 14847 / LMG 12228 / 1C / PRS 101 / PAO1), this protein is Urease accessory protein UreD.